The chain runs to 210 residues: Chaperone protein TorD (210 aa).

It belongs to the TorD/DmsD family. TorD subfamily.

The protein resides in the cytoplasm. Its function is as follows. Involved in the biogenesis of TorA. Acts on TorA before the insertion of the molybdenum cofactor and, as a result, probably favors a conformation of the apoenzyme that is competent for acquiring the cofactor. This chain is Chaperone protein TorD, found in Salmonella dublin (strain CT_02021853).